Reading from the N-terminus, the 456-residue chain is tRNA modification GTPase MnmE (456 aa).

Residues Arg-25, Glu-82, and Lys-121 each contribute to the (6S)-5-formyl-5,6,7,8-tetrahydrofolate site. One can recognise a TrmE-type G domain in the interval 217 to 379; it reads GMKVVIAGRP…LKAHLKSVMG (163 aa). Residue Asn-227 coordinates K(+). Residues 227–232, 246–252, and 271–274 each bind GTP; these read NAGKSS, TNIAGTT, and DTAG. Ser-231 lines the Mg(2+) pocket. Thr-246, Ile-248, and Thr-251 together coordinate K(+). Thr-252 is a Mg(2+) binding site. Position 456 (Lys-456) interacts with (6S)-5-formyl-5,6,7,8-tetrahydrofolate.

The protein belongs to the TRAFAC class TrmE-Era-EngA-EngB-Septin-like GTPase superfamily. TrmE GTPase family. In terms of assembly, homodimer. Heterotetramer of two MnmE and two MnmG subunits. It depends on K(+) as a cofactor.

It localises to the cytoplasm. Functionally, exhibits a very high intrinsic GTPase hydrolysis rate. Involved in the addition of a carboxymethylaminomethyl (cmnm) group at the wobble position (U34) of certain tRNAs, forming tRNA-cmnm(5)s(2)U34. This is tRNA modification GTPase MnmE from Saccharophagus degradans (strain 2-40 / ATCC 43961 / DSM 17024).